The following is a 403-amino-acid chain: SEC14-like protein 4 (403 aa).

In terms of domain architecture, CRAL-TRIO spans 76–249 (APEVIQLYDS…EFGGTMTDPD (174 aa)). Residues 275 to 383 (RPQYEHSVVV…TKKVGYTAEV (109 aa)) enclose the GOLD domain.

Its function is as follows. Probable hydrophobic ligand-binding protein; may play a role in the transport of hydrophobic ligands like tocopherol, squalene and phospholipids. In Mus musculus (Mouse), this protein is SEC14-like protein 4 (Sec14l4).